A 275-amino-acid polypeptide reads, in one-letter code: Reticulon-like protein B1 (275 aa).

Composition is skewed to basic and acidic residues over residues 1–10 (MAEEHKHDES) and 20–38 (VVER…HHGG). The segment at 1–68 (MAEEHKHDES…PSSPSSSMKS (68 aa)) is disordered. N-acetylalanine is present on alanine 2. A compositionally biased stretch (low complexity) spans 59–68 (PSSPSSSMKS). Positions 89–274 (PADIFMWKNK…PLGPLKNKKK (186 aa)) constitute a Reticulon domain. Helical transmembrane passes span 99–119 (KMSG…ELME), 120–140 (YHLL…LFLW), and 194–214 (FLIA…FNFL).

In terms of assembly, interacts with VirB2. Predominantly expressed in root tissues.

The protein resides in the endoplasmic reticulum membrane. It is found in the cell membrane. Plays a role in the Agrobacterium-mediated plant transformation via its interaction with VirB2, the major component of the T-pilus. The chain is Reticulon-like protein B1 (RTNLB1) from Arabidopsis thaliana (Mouse-ear cress).